Reading from the N-terminus, the 159-residue chain is Abscisic acid and environmental stress-inducible protein (159 aa).

A run of 6 repeats spans residues 38–49, 50–61, 63–74, 77–88, 91–102, and 105–116. A 7 X 12 AA repeats of G-G-G-Y-N-H-G-G-G-Y-N region spans residues 38-135; that stretch reads GGGYNHGGGG…GYNHGGGGCQ (98 aa). The 7; approximate repeat unit spans residues 124 to 135; it reads GGGYNHGGGGCQ.

Belongs to the GRP family.

This Medicago sativa subsp. falcata (Sickle medic) protein is Abscisic acid and environmental stress-inducible protein.